Reading from the N-terminus, the 44-residue chain is Photosystem I reaction center subunit IX (44 aa).

Residues 7-27 traverse the membrane as a helical segment; that stretch reads YLSTAPVLATLWFSSLAGLLI.

It belongs to the PsaJ family.

The protein resides in the plastid. It is found in the chloroplast thylakoid membrane. May help in the organization of the PsaE and PsaF subunits. This Welwitschia mirabilis (Tree tumbo) protein is Photosystem I reaction center subunit IX.